A 715-amino-acid polypeptide reads, in one-letter code: Fatty acid oxidation complex subunit alpha (715 aa).

The interval 1 to 190 (MTTTSAFMLN…KAGLVDDVVP (190 aa)) is enoyl-CoA hydratase. Residues 306–715 (GPLNSVGILG…WTNGETDQGN (410 aa)) are 3-hydroxyacyl-CoA dehydrogenase.

This sequence in the N-terminal section; belongs to the enoyl-CoA hydratase/isomerase family. The protein in the central section; belongs to the 3-hydroxyacyl-CoA dehydrogenase family. In terms of assembly, heterotetramer of two alpha chains (FadJ) and two beta chains (FadI).

The protein resides in the cytoplasm. The enzyme catalyses a (3S)-3-hydroxyacyl-CoA = a (2E)-enoyl-CoA + H2O. The catalysed reaction is a 4-saturated-(3S)-3-hydroxyacyl-CoA = a (3E)-enoyl-CoA + H2O. It catalyses the reaction a (3S)-3-hydroxyacyl-CoA + NAD(+) = a 3-oxoacyl-CoA + NADH + H(+). It carries out the reaction (3S)-3-hydroxybutanoyl-CoA = (3R)-3-hydroxybutanoyl-CoA. It participates in lipid metabolism; fatty acid beta-oxidation. Its function is as follows. Catalyzes the formation of a hydroxyacyl-CoA by addition of water on enoyl-CoA. Also exhibits 3-hydroxyacyl-CoA epimerase and 3-hydroxyacyl-CoA dehydrogenase activities. The sequence is that of Fatty acid oxidation complex subunit alpha from Salmonella agona (strain SL483).